The primary structure comprises 402 residues: Phosphoglycerate kinase (402 aa).

Substrate contacts are provided by residues 21-23 (DLN), Arg36, 59-62 (HLGR), Arg114, and Arg147. ATP contacts are provided by residues Lys202, Glu329, and 355–358 (GGDT).

It belongs to the phosphoglycerate kinase family. As to quaternary structure, monomer.

It is found in the cytoplasm. It catalyses the reaction (2R)-3-phosphoglycerate + ATP = (2R)-3-phospho-glyceroyl phosphate + ADP. The protein operates within carbohydrate degradation; glycolysis; pyruvate from D-glyceraldehyde 3-phosphate: step 2/5. This is Phosphoglycerate kinase from Psychrobacter sp. (strain PRwf-1).